Here is a 624-residue protein sequence, read N- to C-terminus: Penicillin-binding protein 4 (624 aa).

A signal peptide spans 1 to 21; that stretch reads MTMLRKIIGWILLLCIIPLFA. Glu-96 acts as the Proton donor; for transglycosylase activity in catalysis. The Acyl-ester intermediate; for transpeptidase activity role is filled by Ser-388.

It in the N-terminal section; belongs to the glycosyltransferase 51 family. The protein in the C-terminal section; belongs to the transpeptidase family. In terms of processing, the N-terminus is blocked.

Its subcellular location is the cell membrane. The catalysed reaction is [GlcNAc-(1-&gt;4)-Mur2Ac(oyl-L-Ala-gamma-D-Glu-L-Lys-D-Ala-D-Ala)](n)-di-trans,octa-cis-undecaprenyl diphosphate + beta-D-GlcNAc-(1-&gt;4)-Mur2Ac(oyl-L-Ala-gamma-D-Glu-L-Lys-D-Ala-D-Ala)-di-trans,octa-cis-undecaprenyl diphosphate = [GlcNAc-(1-&gt;4)-Mur2Ac(oyl-L-Ala-gamma-D-Glu-L-Lys-D-Ala-D-Ala)](n+1)-di-trans,octa-cis-undecaprenyl diphosphate + di-trans,octa-cis-undecaprenyl diphosphate + H(+). The enzyme catalyses Preferential cleavage: (Ac)2-L-Lys-D-Ala-|-D-Ala. Also transpeptidation of peptidyl-alanyl moieties that are N-acyl substituents of D-alanine.. Functionally, cell wall formation. Synthesis of cross-linked peptidoglycan from the lipid intermediates. The enzyme has a penicillin-insensitive transglycosylase N-terminal domain (formation of linear glycan strands) and a penicillin-sensitive transpeptidase C-terminal domain (cross-linking of the peptide subunits). Has a partially redundant function with PBP-2A (pbpA) during spore outgrowth. In Bacillus subtilis (strain 168), this protein is Penicillin-binding protein 4.